We begin with the raw amino-acid sequence, 212 residues long: Ropporin-1 (212 aa).

Positions 12–43 (PELPELLKQFTKAAIRSQPQDLIQWAAEYFGA) constitute an RIIa domain. Serine 56 bears the Phosphoserine mark. The tract at residues 209 to 212 (VRLE) is interaction with RHPN1.

It belongs to the ropporin family. As to quaternary structure, homodimer. Interacts with AKAP3. May interact with SPA17. Interacts with RHPN1. Interacts with FSCB; the interaction increases upon spermatozoa capacitation conditions. Interacts with CFAP61. Sumoylated, sumoylation decreases upon spermatozoa capacitation conditions.

Its subcellular location is the cell projection. It localises to the cilium. It is found in the flagellum. Functionally, important for male fertility. With ROPN1L, involved in fibrous sheath integrity and sperm motility, plays a role in PKA-dependent signaling processes required for spermatozoa capacitation. The chain is Ropporin-1 (ROPN1) from Bos taurus (Bovine).